The following is a 772-amino-acid chain: Ion-translocating oxidoreductase complex subunit C (772 aa).

4Fe-4S ferredoxin-type domains are found at residues 369–397 and 407–436; these read GEPQ…QQLY and KATT…VQYF. [4Fe-4S] cluster-binding residues include Cys-377, Cys-380, Cys-383, Cys-387, Cys-416, Cys-419, Cys-422, and Cys-426. Disordered stretches follow at residues 602 to 684, 696 to 717, and 727 to 746; these read KLEQ…DPRK, ARKL…PRKA, and KARK…QVDP. Residues 605–615 are compositionally biased toward low complexity; the sequence is QQQANAEPEQQ.

This sequence belongs to the 4Fe4S bacterial-type ferredoxin family. RnfC subfamily. The complex is composed of six subunits: RsxA, RsxB, RsxC, RsxD, RsxE and RsxG. [4Fe-4S] cluster serves as cofactor.

It is found in the cell inner membrane. Functionally, part of a membrane-bound complex that couples electron transfer with translocation of ions across the membrane. Required to maintain the reduced state of SoxR. This Escherichia coli O157:H7 (strain EC4115 / EHEC) protein is Ion-translocating oxidoreductase complex subunit C.